A 600-amino-acid chain; its full sequence is Chaperone protein DnaK (600 aa).

A Phosphothreonine; by autocatalysis modification is found at Thr-175. Residues 569-578 show a composition bias toward low complexity; that stretch reads SFAQATAQQA. Residues 569 to 600 are disordered; that stretch reads SFAQATAQQANTSESDPKADDSNTIDAEIKQD. Basic and acidic residues predominate over residues 583-600; the sequence is SDPKADDSNTIDAEIKQD.

Belongs to the heat shock protein 70 family.

Its function is as follows. Acts as a chaperone. This is Chaperone protein DnaK from Mesomycoplasma hyopneumoniae (strain 7448) (Mycoplasma hyopneumoniae).